A 214-amino-acid polypeptide reads, in one-letter code: Orotate phosphoribosyltransferase (214 aa).

Residue Lys26 coordinates 5-phospho-alpha-D-ribose 1-diphosphate. 34–35 (FF) provides a ligand contact to orotate. Residues 72–73 (YK), Arg99, Lys100, Lys103, His105, and 124–132 (DDVITAGTA) each bind 5-phospho-alpha-D-ribose 1-diphosphate. Residues Thr128 and Arg157 each coordinate orotate.

The protein belongs to the purine/pyrimidine phosphoribosyltransferase family. PyrE subfamily. In terms of assembly, homodimer. Mg(2+) serves as cofactor.

The catalysed reaction is orotidine 5'-phosphate + diphosphate = orotate + 5-phospho-alpha-D-ribose 1-diphosphate. It participates in pyrimidine metabolism; UMP biosynthesis via de novo pathway; UMP from orotate: step 1/2. Catalyzes the transfer of a ribosyl phosphate group from 5-phosphoribose 1-diphosphate to orotate, leading to the formation of orotidine monophosphate (OMP). The sequence is that of Orotate phosphoribosyltransferase from Pseudomonas fluorescens (strain SBW25).